A 715-amino-acid chain; its full sequence is MHLLPALAGVLATLVLAQPCEGTDPASPGAVETSVLRDCIAEAKLLVDAAYNWTQKSIKQRLRSGSASPMDLLSYFKQPVAATRTVVRAADYMHVALGLLEEKLQPQRSGPFNVTDVLTEPQLRLLSQASGCALRDQAERCSDKYRTITGRCNNKRRPLLGASNQALARWLPAEYEDGLSLPFGWTPSRRRNGFLLPLVRAVSNQIVRFPNERLTSDRGRALMFMQWGQFIDHDLDFSPESPARVAFTAGVDCERTCAQLPPCFPIKIPPNDPRIKNQRDCIPFFRSAPSCPQNKNRVRNQINALTSFVDASMVYGSEVSLSLRLRNRTNYLGLLAINQRFQDNGRALLPFDNLHDDPCLLTNRSARIPCFLAGDTRSTETPKLAAMHTLFMREHNRLATELRRLNPRWNGDKLYNEARKIMGAMVQIITYRDFLPLVLGKARARRTLGHYRGYCSNVDPRVANVFTLAFRFGHTMLQPFMFRLDSQYRASAPNSHVPLSSAFFASWRIVYEGGIDPILRGLMATPAKLNRQDAMLVDELRDRLFRQVRRIGLDLAALNMQRSRDHGLPGYNAWRRFCGLSQPRNLAQLSRVLKNQDLARKFLNLYGTPDNIDIWIGAIAEPLLPGARVGPLLACLFENQFRRARDGDRFWWQKRGVFTKRQRKALSRISLSRIICDNTGITTVSRDIFRANIYPRGFVNCSRIPRLNLSAWRGT.

Positions 1–17 are cleaved as a signal peptide; that stretch reads MHLLPALAGVLATLVLA. Residues 18–139 constitute a propeptide that is removed on maturation; the sequence is QPCEGTDPAS…SGCALRDQAE (122 aa). Residues Asn52 and Asn113 are each glycosylated (N-linked (GlcNAc...) asparagine). A disulfide bridge links Cys141 with Cys152. Heme b is bound at residue Asp232. His233 acts as the Proton acceptor in catalysis. Ca(2+) is bound at residue Asp234. 2 disulfides stabilise this stretch: Cys253–Cys263 and Cys257–Cys281. Ca(2+)-binding residues include Thr306, Phe308, Asp310, and Ser312. N-linked (GlcNAc...) asparagine glycosylation is found at Asn327 and Asn363. Cys359 and Cys370 are disulfide-bonded. The heme b site is built by Glu380 and His474. A 3'-nitrotyrosine modification is found at Tyr488. 2 disulfide bridges follow: Cys578–Cys635 and Cys676–Cys701. 2 N-linked (GlcNAc...) asparagine glycosylation sites follow: Asn700 and Asn708.

Belongs to the peroxidase family. XPO subfamily. As to quaternary structure, tetramer of two light chains and two heavy chains. It depends on Ca(2+) as a cofactor. Heme b is required as a cofactor.

The protein localises to the cytoplasmic granule. The enzyme catalyses 2 a phenolic donor + H2O2 = 2 a phenolic radical donor + 2 H2O. In terms of biological role, mediates tyrosine nitration of secondary granule proteins in mature resting eosinophils. Shows significant inhibitory activity towards Mycobacterium tuberculosis H37Rv by inducing bacterial fragmentation and lysis. The chain is Eosinophil peroxidase (EPX) from Homo sapiens (Human).